The primary structure comprises 350 residues: MKKTRTANLHHLYHEALPEDVKLTPRVEVDNVHQRRTTDVYEHALTITAWQQIYDQLHPGKFHGEFTEILLDEIQVFREYTGLALRQSCLVWPNSFWFGIPATRGEQGFIGAQGLGSAEIATRPGGTEFELSTPDDYTILGVVISEDVISRQATFLHNPERVLHMLRNQLALEVKEQHKAALWGFVQQALATFSESPETLHQPAVRKVLSDNLLLAMGTMLEEAKPIHSAESISHQGYRRLLSRAREYVLENMSEPLTVLDLCNQLHVSRRTLQNAFHAILGIGPNAWLKRIRLNAVRRELISPWSQSATVKDAAMQWGFWHLGQFATDYQQLFAEKPSLTLHQRMRQWA.

Residues serine 243–glutamine 344 form the HTH araC/xylS-type domain. DNA-binding regions (H-T-H motif) lie at residues leucine 260 to leucine 281 and valine 311 to phenylalanine 334.

Its pathway is amine and polyamine degradation; ethanolamine degradation. Activates the transcription of the eut operon, allowing utilization of ethanolamine (EA). Positively regulates its own transcription. Probably binds EA and vitamin B12 as effectors. Competes with ethanolamine ammonia-lysase (EAL, the first enzyme in the EA degradation pathway) for adenosylcobalamin. Ethanolamine-associated signaling mediated via this protein, but not EA degradation, impacts S.typhimurium survival within macrophages. Binds the promoter of ssrB and eutS in vitro; in mouse infection models binding to ssrB probably induces all 4 operons of pathogenicity island SPI-2. Its function is as follows. Expression of the eut operon allows this bacteria to use ethanolamine (EA) as a carbon, nitrogen and energy source. It relies on cobalamin (vitamin B12) both as a cofactor for the ethanolamine ammonia-lyase (EAL) activity and to induce the operon. EA enhances bacterial survival in macrophages in a concentration-dependent manner, suggesting it is an important nutrient in infection. The sequence is that of HTH-type DNA-binding transcriptional activator EutR from Salmonella typhimurium (strain LT2 / SGSC1412 / ATCC 700720).